Reading from the N-terminus, the 396-residue chain is NAD(P)H oxidoreductase RTN4IP1, mitochondrial (396 aa).

A mitochondrion-targeting transit peptide spans 1 to 40 (MGVLKTCVLRRSACAAACFWRRTVIPKPPFRGISTTSARS). The 342-residue stretch at 52 to 393 (GKNEVLRFTQ…RGHARGKTVV (342 aa)) folds into the Enoyl reductase (ER) domain. Positions 214, 216, 217, 237, 255, 276, 300, 341, 343, 386, 387, and 388 each coordinate NADPH.

Belongs to the zinc-containing alcohol dehydrogenase family. Quinone oxidoreductase subfamily. In terms of assembly, interacts with RTN4, UQCRC1 and UQCRC2. As to expression, widely expressed in mitochondria-enriched tissues. Found in heart, kidney, liver, brain and spinal cord.

Its subcellular location is the mitochondrion matrix. It localises to the mitochondrion outer membrane. It carries out the reaction a 3-demethylubiquinone + NADH + 2 H(+) = a 3-demethylubiquinol + NAD(+). It catalyses the reaction a 3-demethylubiquinone + NADPH + 2 H(+) = a 3-demethylubiquinol + NADP(+). The catalysed reaction is 3-demethylubiquinone-10 + NADH + 2 H(+) = 3-demethylubiquinol-10 + NAD(+). The enzyme catalyses 3-demethylubiquinone-10 + NADPH + 2 H(+) = 3-demethylubiquinol-10 + NADP(+). Its pathway is cofactor biosynthesis; ubiquinone biosynthesis. Functionally, NAD(P)H oxidoreductase involved in the ubiquinone biosynthetic pathway. Required for the O-methyltransferase activity of COQ3. Able to catalyze the oxidoreduction of 3-demethylubiquinone into 3-demethylubiquinol in vitro. However, it is unclear if 3-demethylubiquinone constitutes a substrate in vivo. May also play a role in the regulation of retinal ganglion cell (RGC) neurite outgrowth, and hence in the development of the inner retina and optic nerve. Appears to be a potent inhibitor of regeneration following spinal cord injury. In Mus musculus (Mouse), this protein is NAD(P)H oxidoreductase RTN4IP1, mitochondrial.